We begin with the raw amino-acid sequence, 670 residues long: Extracellular matrix protein 2 (670 aa).

The N-terminal stretch at 1–19 is a signal peptide; it reads MKLAVLFCFILLIVLQTDC. The VWFC domain maps to 96-153; it reads GYCFVKGMIMYNKAVWSPEPCTTCLCSNGRVLCDETECHPKACPYTIKPEGECCPICS. Residues 185–270 are disordered; the sequence is SEEDEEIAEG…EEDAIRGDVF (86 aa). Basic and acidic residues predominate over residues 192–227; it reads AEGHKEHKKETSVPTKIHGDGERTERKLRPEKEGRS. Residues 241–263 are compositionally biased toward acidic residues; sequence ESKEETEREGEEEEEEEEEEEED. The Cell attachment site motif lies at 266-268; sequence RGD. In terms of domain architecture, LRRNT spans 278-315; sequence PGTPRGRPRLPRSCSLSYRTISCVHADFTEIPPITAPE. LRR repeat units lie at residues 339–359, 365–386, 387–407, 410–430, 436–456, 457–478, 481–501, 507–528, 529–549, 553–573, 580–601, 603–624, and 632–655; these read NLERLDLSRNNITSSGIGPKA, KLMRLNMDGNNLVHIPSDLPST, LEELKINDNNLQAIDEKSLSD, QLVTLELEGNNLSEINVDPLA, SLSYLRLGRNKFRIIPQGLPA, STEELYLENNQIEEITEICFNH, KITMIILRYNKIEESRIAPLA, NLESIDLSYNKLYHVPSYLPKS, LLHLVLIGNQIDRIPGYVFGH, GLEYLYLSFNRLSDDGVDLVS, SLRELFLDHNDFKSIPPGIQDM, ALHFLRLNNNKIRNIHPEQICN, and ALEHLHLENNYIRTREISSYAFSC. Residue N349 is glycosylated (N-linked (GlcNAc...) asparagine). N420 is a glycosylation site (N-linked (GlcNAc...) asparagine). The N-linked (GlcNAc...) asparagine glycan is linked to N477.

It belongs to the small leucine-rich proteoglycan (SLRP) family. SLRP class I subfamily. In terms of assembly, interacts with numerous extracellular matrix proteins. Interacts with isoform 1 of MSL1. Interacts with isoform 3 of RASSF1.

It is found in the secreted. Its subcellular location is the extracellular space. It localises to the extracellular matrix. Its function is as follows. Promotes matrix assembly and cell adhesiveness. The chain is Extracellular matrix protein 2 (Ecm2) from Mus musculus (Mouse).